Here is a 131-residue protein sequence, read N- to C-terminus: Profilin-6 (131 aa).

A disulfide bond links Cys13 and Cys115. Residues 81 to 97 (VVIRGKKGAGGITIKKT) carry the Involved in PIP2 interaction motif. Thr111 carries the post-translational modification Phosphothreonine.

The protein belongs to the profilin family. In terms of assembly, occurs in many kinds of cells as a complex with monomeric actin in a 1:1 ratio. Post-translationally, phosphorylated by MAP kinases.

The protein localises to the cytoplasm. Its subcellular location is the cytoskeleton. In terms of biological role, binds to actin and affects the structure of the cytoskeleton. At high concentrations, profilin prevents the polymerization of actin, whereas it enhances it at low concentrations. This chain is Profilin-6, found in Corylus avellana (European hazel).